The primary structure comprises 459 residues: tRNA-guanine(15) transglycosylase (459 aa).

The Nucleophile role is filled by Asp90. Positions 125 and 192 each coordinate substrate. Cys275, Cys277, and Cys280 together coordinate Zn(2+).

This sequence belongs to the archaeosine tRNA-ribosyltransferase family. Zn(2+) is required as a cofactor.

It catalyses the reaction guanosine(15) in tRNA + 7-cyano-7-deazaguanine = 7-cyano-7-carbaguanosine(15) in tRNA + guanine. Its pathway is tRNA modification; archaeosine-tRNA biosynthesis. Exchanges the guanine residue with 7-cyano-7-deazaguanine (preQ0) at position 15 in the dihydrouridine loop (D-loop) of archaeal tRNAs. This Methanopyrus kandleri (strain AV19 / DSM 6324 / JCM 9639 / NBRC 100938) protein is tRNA-guanine(15) transglycosylase.